The sequence spans 144 residues: Superoxide dismutase [Mn], mitochondrial (144 aa).

Mn(2+) contacts are provided by His-10, His-58, and Asp-143.

The protein belongs to the iron/manganese superoxide dismutase family. Homotetramer. Requires Mn(2+) as cofactor.

The protein resides in the mitochondrion matrix. It catalyses the reaction 2 superoxide + 2 H(+) = H2O2 + O2. Destroys superoxide anion radicals which are normally produced within the cells and which are toxic to biological systems. The protein is Superoxide dismutase [Mn], mitochondrial of Apostichopus californicus (California sea cucumber).